Here is a 119-residue protein sequence, read N- to C-terminus: Large ribosomal subunit protein uL22c (119 aa).

It belongs to the universal ribosomal protein uL22 family. Part of the 50S ribosomal subunit.

It is found in the plastid. Its subcellular location is the chloroplast. Its function is as follows. This protein binds specifically to 23S rRNA. Functionally, the globular domain of the protein is located near the polypeptide exit tunnel on the outside of the subunit, while an extended beta-hairpin is found that lines the wall of the exit tunnel in the center of the 70S ribosome. This is Large ribosomal subunit protein uL22c (rpl22) from Mesostigma viride (Green alga).